Consider the following 808-residue polypeptide: Probable potassium transporter 3 (808 aa).

At 1-34 (MPVADCESGLSPADVTGAGAANGNPGHWRSYYRH) the chain is on the cytoplasmic side. A helical transmembrane segment spans residues 35–55 (VLLLAYQSCGVVYGDLSTSPL). The Extracellular portion of the chain corresponds to 56–81 (YVYKSTFIIGSLRRFQDEEIVFGVFS). A helical transmembrane segment spans residues 82-102 (LVFWTLTLIPLLKYVFIVLAA). Residues 103 to 167 (DDNGEGGTFA…FLENHRKSRT (65 aa)) are Cytoplasmic-facing. Residues 168–188 (FLLVTVLFGASLVIGDGVLTP) traverse the membrane as a helical segment. At 189 to 204 (PMSVLSSFSGLQVHST) the chain is on the extracellular side. Residues 205–225 (ALTSGEVEILSCTVLVCLFMV) form a helical membrane-spanning segment. Over 226–232 (QHWGTHR) the chain is Cytoplasmic. A helical transmembrane segment spans residues 233-253 (VAFLFAPVVIVWLLLLGALGV). Over 254 to 283 (YNIVVWNPRVLRALSPYYLVRFFQHTGKDG) the chain is Extracellular. The helical transmembrane segment at 284–304 (WISLGGILLSMTGTEAMYADL) threads the bilayer. Residues 305-313 (GHFTAASIR) are Cytoplasmic-facing. Residues 314–334 (VAFVGLIYPCLVLQYMGQAAF) form a helical membrane-spanning segment. Residues 335 to 354 (LSKSPHCDIHFVFFESIPTG) lie on the Extracellular side of the membrane. The helical transmembrane segment at 355–375 (IFWPVLVIATLAAIVGSQAVI) threads the bilayer. Over 376–406 (SATFSIVRQCTALGCFPRVKIVHTSRRIHGQ) the chain is Cytoplasmic. Residues 407-427 (IYSPEINWILMLLCIAVTMGL) form a helical membrane-spanning segment. Over 428 to 439 (RDTTLIGNAYGM) the chain is Extracellular. The helical transmembrane segment at 440–460 (ACAGVMLVTTLLMALVIVFVW) threads the bilayer. Topologically, residues 461–464 (QYSC) are cytoplasmic. The chain crosses the membrane as a helical span at residues 465–485 (LVAALFLVAFGVVEAVYLSAA). The Extracellular segment spans residues 486-491 (LMKVPQ). A helical membrane pass occupies residues 492 to 512 (GGWLPLVLSLVFVAVMYVWHY). The Cytoplasmic portion of the chain corresponds to 513 to 808 (GTRRKHQFDV…LIEVGMIYYV (296 aa)).

The protein belongs to the HAK/KUP transporter (TC 2.A.72.3) family.

The protein resides in the membrane. In terms of biological role, high-affinity potassium transporter. The protein is Probable potassium transporter 3 (HAK3) of Oryza sativa subsp. japonica (Rice).